Consider the following 416-residue polypeptide: Chaperone protein dnaJ A6 (416 aa).

One can recognise a J domain in the interval 12-73 (KYYEVLGVPK…EKRDIYDQYG (62 aa)). The CR-type zinc finger occupies 133 to 217 (GSMKKLSLSR…CRASKVIQEK (85 aa)). Zn(2+) contacts are provided by Cys-146, Cys-149, Cys-162, Cys-165, Cys-189, Cys-192, Cys-205, and Cys-208. CXXCXGXG motif repeat units follow at residues 146 to 153 (CPKCKGKG), 162 to 169 (CYGCHGVG), and 189 to 196 (CPECRGSG). The segment covering 380–399 (HDVNIEEEMRRKQYQRKQEA) has biased composition (basic and acidic residues). The disordered stretch occupies residues 380-416 (HDVNIEEEMRRKQYQRKQEAYDEDEEEDAPRVQCAQQ).

The protein belongs to the DnaJ family. Interacts with ZFP1.

Its subcellular location is the nucleus. The protein localises to the cytoplasm. Its function is as follows. Involved in disease resistance. Acts as a negative regulator of innate immunity to the rice blast fungus (Magnaporthe oryzae). Acts as a negative regulator of the pathogen-associated molecular pattern (PAMP)-triggered immunity (PTI) response through the inhibition of reactive oxygen species (ROS) accumulation and expression of defense-related genes. May function via the ubiquitin-proteasome degradation pathway. The sequence is that of Chaperone protein dnaJ A6 from Oryza sativa subsp. japonica (Rice).